The following is a 341-amino-acid chain: Ketol-acid reductoisomerase (NADP(+)) (341 aa).

In terms of domain architecture, KARI N-terminal Rossmann spans 1–182 (MATIYYDKDA…GCTRAGVLET (182 aa)). NADP(+)-binding positions include 25-28 (YGSQ), serine 51, serine 53, and 83-86 (DQTQ). Histidine 108 is an active-site residue. Residue glycine 134 coordinates NADP(+). The region spanning 183–328 (TFKEETETDL…KRLRDMMSWI (146 aa)) is the KARI C-terminal knotted domain. Aspartate 191, glutamate 195, glutamate 227, and glutamate 231 together coordinate Mg(2+). A substrate-binding site is contributed by serine 252.

Belongs to the ketol-acid reductoisomerase family. Mg(2+) serves as cofactor.

The enzyme catalyses (2R)-2,3-dihydroxy-3-methylbutanoate + NADP(+) = (2S)-2-acetolactate + NADPH + H(+). It carries out the reaction (2R,3R)-2,3-dihydroxy-3-methylpentanoate + NADP(+) = (S)-2-ethyl-2-hydroxy-3-oxobutanoate + NADPH + H(+). Its pathway is amino-acid biosynthesis; L-isoleucine biosynthesis; L-isoleucine from 2-oxobutanoate: step 2/4. The protein operates within amino-acid biosynthesis; L-valine biosynthesis; L-valine from pyruvate: step 2/4. Its function is as follows. Involved in the biosynthesis of branched-chain amino acids (BCAA). Catalyzes an alkyl-migration followed by a ketol-acid reduction of (S)-2-acetolactate (S2AL) to yield (R)-2,3-dihydroxy-isovalerate. In the isomerase reaction, S2AL is rearranged via a Mg-dependent methyl migration to produce 3-hydroxy-3-methyl-2-ketobutyrate (HMKB). In the reductase reaction, this 2-ketoacid undergoes a metal-dependent reduction by NADPH to yield (R)-2,3-dihydroxy-isovalerate. The sequence is that of Ketol-acid reductoisomerase (NADP(+)) from Anaeromyxobacter sp. (strain K).